A 489-amino-acid polypeptide reads, in one-letter code: Glycogen synthase (489 aa).

Residue Lys18 participates in ADP-alpha-D-glucose binding.

The protein belongs to the glycosyltransferase 1 family. Bacterial/plant glycogen synthase subfamily.

It carries out the reaction [(1-&gt;4)-alpha-D-glucosyl](n) + ADP-alpha-D-glucose = [(1-&gt;4)-alpha-D-glucosyl](n+1) + ADP + H(+). The protein operates within glycan biosynthesis; glycogen biosynthesis. Synthesizes alpha-1,4-glucan chains using ADP-glucose. The sequence is that of Glycogen synthase from Rhodopseudomonas palustris (strain BisA53).